Reading from the N-terminus, the 111-residue chain is Disintegrin CV-11-alpha (111 aa).

The N-terminal stretch at 1 to 20 (MIQVLLVIICLAVFPYQGSS) is a signal peptide. The propeptide occupies 21 to 46 (IILESGNVNDFELVYPKKVTVLPTGA). Positions 47–111 (MNSAHPCCDP…SDCPRNPWKD (65 aa)) constitute a Disintegrin domain. Disulfide bonds link Cys-53–Cys-76, Cys-67–Cys-73, Cys-72–Cys-97, and Cys-85–Cys-104. Positions 89-91 (KGD) match the Cell attachment site motif.

It belongs to the disintegrin family. Dimeric disintegrin subfamily. Heterodimer with subunit beta; disulfide-linked. As to expression, expressed by the venom gland.

It is found in the secreted. Inhibits ADP-induced human platelet aggregation. Antagonist of alpha-IIb/beta-3 (ITGA2B/ITGB3). The protein is Disintegrin CV-11-alpha of Cerastes vipera (Sahara sand viper).